Reading from the N-terminus, the 392-residue chain is 4-hydroxy-3-methylbut-2-en-1-yl diphosphate synthase (flavodoxin) (392 aa).

Residues C280, C283, C315, and E322 each coordinate [4Fe-4S] cluster. Residues 371-380 (TEKGSDHCSE) are compositionally biased toward basic and acidic residues. The interval 371-392 (TEKGSDHCSETTRSGSPVVTVN) is disordered. The segment covering 381-392 (TTRSGSPVVTVN) has biased composition (polar residues).

This sequence belongs to the IspG family. It depends on [4Fe-4S] cluster as a cofactor.

It carries out the reaction (2E)-4-hydroxy-3-methylbut-2-enyl diphosphate + oxidized [flavodoxin] + H2O + 2 H(+) = 2-C-methyl-D-erythritol 2,4-cyclic diphosphate + reduced [flavodoxin]. It functions in the pathway isoprenoid biosynthesis; isopentenyl diphosphate biosynthesis via DXP pathway; isopentenyl diphosphate from 1-deoxy-D-xylulose 5-phosphate: step 5/6. Functionally, converts 2C-methyl-D-erythritol 2,4-cyclodiphosphate (ME-2,4cPP) into 1-hydroxy-2-methyl-2-(E)-butenyl 4-diphosphate. The protein is 4-hydroxy-3-methylbut-2-en-1-yl diphosphate synthase (flavodoxin) of Mycobacterium leprae (strain Br4923).